The chain runs to 285 residues: Protoheme IX farnesyltransferase (285 aa).

8 helical membrane-spanning segments follow: residues 19–39, 40–60, 90–110, 111–131, 135–155, 165–185, 220–240, and 265–285; these read RIIWLLDLAALSGAFLSGKLM, PLSILAVLVGGTFASAGSMII, AIYVGIALLTLGTLVGLLDNP, LTSFFILLGGLVYVLVYTVWL, SPLNIVIGGLAGSAAAWAGYA, SILLGLLIFMWTPGHFWALAL, IPFALALYLYAGVIYGIVAGI, and FKFSSPYLAILLILIILTRLI.

It belongs to the UbiA prenyltransferase family. Protoheme IX farnesyltransferase subfamily.

The protein localises to the cell membrane. The enzyme catalyses heme b + (2E,6E)-farnesyl diphosphate + H2O = Fe(II)-heme o + diphosphate. Its pathway is porphyrin-containing compound metabolism; heme O biosynthesis; heme O from protoheme: step 1/1. In terms of biological role, converts heme B (protoheme IX) to heme O by substitution of the vinyl group on carbon 2 of heme B porphyrin ring with a hydroxyethyl farnesyl side group. The chain is Protoheme IX farnesyltransferase from Metallosphaera sedula (strain ATCC 51363 / DSM 5348 / JCM 9185 / NBRC 15509 / TH2).